Here is a 318-residue protein sequence, read N- to C-terminus: Methionyl-tRNA formyltransferase (318 aa).

110–113 (SLLP) is a binding site for (6S)-5,6,7,8-tetrahydrofolate.

This sequence belongs to the Fmt family.

It catalyses the reaction L-methionyl-tRNA(fMet) + (6R)-10-formyltetrahydrofolate = N-formyl-L-methionyl-tRNA(fMet) + (6S)-5,6,7,8-tetrahydrofolate + H(+). Functionally, attaches a formyl group to the free amino group of methionyl-tRNA(fMet). The formyl group appears to play a dual role in the initiator identity of N-formylmethionyl-tRNA by promoting its recognition by IF2 and preventing the misappropriation of this tRNA by the elongation apparatus. This chain is Methionyl-tRNA formyltransferase, found in Ligilactobacillus salivarius (strain UCC118) (Lactobacillus salivarius).